A 344-amino-acid polypeptide reads, in one-letter code: uncharacterized protein (344 aa).

This is an uncharacterized protein from Caenorhabditis elegans.